The sequence spans 568 residues: Urease subunit alpha (568 aa).

Residues 130–568 (GGIDTHIHFI…LPMAQRYFLF (439 aa)) enclose the Urease domain. Ni(2+) is bound by residues His-135, His-137, and Lys-218. Lys-218 carries the post-translational modification N6-carboxylysine. His-220 lines the substrate pocket. Ni(2+) is bound by residues His-247 and His-273. The active-site Proton donor is the His-321. Asp-361 provides a ligand contact to Ni(2+).

This sequence belongs to the metallo-dependent hydrolases superfamily. Urease alpha subunit family. As to quaternary structure, heterotrimer of UreA (gamma), UreB (beta) and UreC (alpha) subunits. Three heterotrimers associate to form the active enzyme. Ni cation is required as a cofactor. Post-translationally, carboxylation allows a single lysine to coordinate two nickel ions.

The protein localises to the cytoplasm. It carries out the reaction urea + 2 H2O + H(+) = hydrogencarbonate + 2 NH4(+). The protein operates within nitrogen metabolism; urea degradation; CO(2) and NH(3) from urea (urease route): step 1/1. This Burkholderia multivorans (strain ATCC 17616 / 249) protein is Urease subunit alpha.